Consider the following 355-residue polypeptide: MSFFRGLRRTNKVYNDPSGFITDHAQLIRNQTPAGFNLNNPTTMGLANGTYVPGYNINGAFISNTNVNTVLRNNDVVGMRQLFPDASNNQMNGLTNLRRADNIPDATLHGLQTRKNGVKTSHPETAVRDRVGVENALAQNPRLADYLRGAGYVTLFGVSVYLVINVADLVSSIVEALNRTGGSWYYRGNNGGDNFSNIDACVLRYRSCGMSLADIDEFVCELDPHDPNNVDPLLSFDEARNFCNGYSLAAEGSVCRGSDTNADPSTLQYLDISELEPNQTVQCVEPYDFGDLIGDLGLDWLLGENGFVTASSNSLTSVSNNFTTILLVIGGILLLTFIGFVIFKVVNRSSNNNTS.

Residues 150–170 form a helical membrane-spanning segment; that stretch reads AGYVTLFGVSVYLVINVADLV. A glycan (N-linked (GlcNAc...) asparagine; by host) is linked at Asn-178. A helical transmembrane segment spans residues 322-342; the sequence is FTTILLVIGGILLLTFIGFVI.

Belongs to the baculoviridae E56 family.

The protein localises to the virion membrane. Structural protein that is specific for occlusion-derived virus (ODV) envelopes but not of budded virus (BV). This Cydia pomonella granulosis virus (isolate Mexico/1963) (CpGV) protein is Occlusion-derived virus envelope protein E56 (odv-e56).